The chain runs to 517 residues: Heat shock 70-related protein 5 (517 aa).

This sequence belongs to the heat shock protein 70 family.

In terms of biological role, may function in protein folding and assembly, and disassembly of protein complexes. The protein is Heat shock 70-related protein 5 of Dictyostelium discoideum (Social amoeba).